Consider the following 426-residue polypeptide: Serine--tRNA ligase (426 aa).

The span at Q41–Q60 shows a compositional bias: polar residues. Residues Q41–R64 are disordered. T233–E235 provides a ligand contact to L-serine. R264–E266 contacts ATP. An L-serine-binding site is contributed by E287. Residue E351 to S354 participates in ATP binding. S387 contributes to the L-serine binding site.

It belongs to the class-II aminoacyl-tRNA synthetase family. Type-1 seryl-tRNA synthetase subfamily. As to quaternary structure, homodimer. The tRNA molecule binds across the dimer.

The protein resides in the cytoplasm. The catalysed reaction is tRNA(Ser) + L-serine + ATP = L-seryl-tRNA(Ser) + AMP + diphosphate + H(+). It carries out the reaction tRNA(Sec) + L-serine + ATP = L-seryl-tRNA(Sec) + AMP + diphosphate + H(+). It participates in aminoacyl-tRNA biosynthesis; selenocysteinyl-tRNA(Sec) biosynthesis; L-seryl-tRNA(Sec) from L-serine and tRNA(Sec): step 1/1. In terms of biological role, catalyzes the attachment of serine to tRNA(Ser). Is also able to aminoacylate tRNA(Sec) with serine, to form the misacylated tRNA L-seryl-tRNA(Sec), which will be further converted into selenocysteinyl-tRNA(Sec). This Pseudomonas fluorescens (strain ATCC BAA-477 / NRRL B-23932 / Pf-5) protein is Serine--tRNA ligase.